The following is a 74-amino-acid chain: uncharacterized protein (74 aa).

A coiled-coil region spans residues 29-63; it reads LNSKKSALQKDKELQQQAKAQESALAGEELRRRAL.

This is an uncharacterized protein from Pseudoalteromonas phage PM2 (Bacteriophage PM2).